Here is a 199-residue protein sequence, read N- to C-terminus: Ribonuclease HII (199 aa).

Residues 14–199 (GLLAGVDEAG…SFAPVAEVLR (186 aa)) form the RNase H type-2 domain. 3 residues coordinate a divalent metal cation: Asp20, Glu21, and Asp112.

It belongs to the RNase HII family. Mn(2+) serves as cofactor. Requires Mg(2+) as cofactor.

It is found in the cytoplasm. The enzyme catalyses Endonucleolytic cleavage to 5'-phosphomonoester.. Functionally, endonuclease that specifically degrades the RNA of RNA-DNA hybrids. This is Ribonuclease HII from Polaromonas sp. (strain JS666 / ATCC BAA-500).